Consider the following 321-residue polypeptide: Replication factor C small subunit (321 aa).

46–53 (GPAGVGKT) provides a ligand contact to ATP.

The protein belongs to the activator 1 small subunits family. RfcS subfamily. Heterohexamer composed of four small subunits (RfcS) and two large subunits (RfcL).

Its function is as follows. Part of the RFC clamp loader complex which loads the PCNA sliding clamp onto DNA. The complex possesses DNA-dependent ATPase activity which is further stimulated by PCNA. In conjunction with PCNA stimulates DNA synthesis by PolB, relieving inhibition by replication protein A (RPA). This chain is Replication factor C small subunit (rfcS), found in Methanothermobacter thermautotrophicus (strain ATCC 29096 / DSM 1053 / JCM 10044 / NBRC 100330 / Delta H) (Methanobacterium thermoautotrophicum).